The chain runs to 101 residues: Small ribosomal subunit protein uS14 (101 aa).

Belongs to the universal ribosomal protein uS14 family. As to quaternary structure, part of the 30S ribosomal subunit. Contacts proteins S3 and S10.

Its function is as follows. Binds 16S rRNA, required for the assembly of 30S particles and may also be responsible for determining the conformation of the 16S rRNA at the A site. This Salmonella schwarzengrund (strain CVM19633) protein is Small ribosomal subunit protein uS14.